A 315-amino-acid polypeptide reads, in one-letter code: DNA-directed RNA polymerase subunit alpha (315 aa).

Residues 1-229 are alpha N-terminal domain (alpha-NTD); the sequence is MLDSKLKAPV…EHLTYFSNPQ (229 aa). The tract at residues 247-315 is alpha C-terminal domain (alpha-CTD); that stretch reads EQEEELDLPL…LEKKGFTLKE (69 aa).

It belongs to the RNA polymerase alpha chain family. In terms of assembly, homodimer. The RNAP catalytic core consists of 2 alpha, 1 beta, 1 beta' and 1 omega subunit. When a sigma factor is associated with the core the holoenzyme is formed, which can initiate transcription.

It catalyses the reaction RNA(n) + a ribonucleoside 5'-triphosphate = RNA(n+1) + diphosphate. DNA-dependent RNA polymerase catalyzes the transcription of DNA into RNA using the four ribonucleoside triphosphates as substrates. The sequence is that of DNA-directed RNA polymerase subunit alpha from Thermus thermophilus (strain ATCC BAA-163 / DSM 7039 / HB27).